A 430-amino-acid chain; its full sequence is F-box protein At1g49990 (430 aa).

In terms of domain architecture, F-box spans 1–45 (METGRRRTIPEVEILARLPLRSIARFKSVCKRWKSVIESDYFRRL).

The protein is F-box protein At1g49990 of Arabidopsis thaliana (Mouse-ear cress).